The following is a 161-amino-acid chain: Chaperone protein dnaJ 11, chloroplastic (161 aa).

Positions 1–18 (MLSSSPTSFTHPFLSSSP) are enriched in low complexity. The interval 1–31 (MLSSSPTSFTHPFLSSSPPLSPISPPSRTAR) is disordered. A chloroplast-targeting transit peptide spans 1–36 (MLSSSPTSFTHPFLSSSPPLSPISPPSRTARISPPL). The region spanning 65–133 (SLYDVLEVPL…EKRSVYDRRM (69 aa)) is the J domain.

It belongs to the DnaJ family. C/III subfamily. As to expression, expressed in roots, stems, leaves, flowers and developing siliques.

It localises to the plastid. Its subcellular location is the chloroplast stroma. Plays a continuous role in plant development probably in the structural organization of compartments. The polypeptide is Chaperone protein dnaJ 11, chloroplastic (ATJ11) (Arabidopsis thaliana (Mouse-ear cress)).